The chain runs to 279 residues: Probable endonuclease 4 (279 aa).

Positions 74, 112, 147, 180, 183, 214, 227, 229, and 259 each coordinate Zn(2+).

It belongs to the AP endonuclease 2 family. Zn(2+) is required as a cofactor.

The enzyme catalyses Endonucleolytic cleavage to 5'-phosphooligonucleotide end-products.. Functionally, endonuclease IV plays a role in DNA repair. It cleaves phosphodiester bonds at apurinic or apyrimidinic (AP) sites, generating a 3'-hydroxyl group and a 5'-terminal sugar phosphate. This Mycoplasma mobile (strain ATCC 43663 / 163K / NCTC 11711) (Mesomycoplasma mobile) protein is Probable endonuclease 4.